Reading from the N-terminus, the 65-residue chain is Neuropeptide-like protein 28 (65 aa).

A signal peptide spans 1–22; it reads MISTSSILILVFLLACFMATSA. Tyrosine amide is present on residues Y29, Y39, Y47, and Y55. The residue at position 63 (W63) is a Tryptophan amide.

The protein belongs to the YARP (YGGW-amide related peptide) family.

It is found in the secreted. In terms of biological role, may have antimicrobial activity. The chain is Neuropeptide-like protein 28 (nlp-28) from Caenorhabditis elegans.